The primary structure comprises 417 residues: Glutamyl-tRNA reductase (417 aa).

Residues 49-52 (TCNR), serine 107, 112-114 (EEQ), and glutamine 118 each bind substrate. Cysteine 50 (nucleophile) is an active-site residue. 187 to 192 (GTGEVS) is an NADP(+) binding site.

The protein belongs to the glutamyl-tRNA reductase family. Homodimer.

It carries out the reaction (S)-4-amino-5-oxopentanoate + tRNA(Glu) + NADP(+) = L-glutamyl-tRNA(Glu) + NADPH + H(+). It participates in porphyrin-containing compound metabolism; protoporphyrin-IX biosynthesis; 5-aminolevulinate from L-glutamyl-tRNA(Glu): step 1/2. Catalyzes the NADPH-dependent reduction of glutamyl-tRNA(Glu) to glutamate 1-semialdehyde (GSA). In Cenarchaeum symbiosum (strain A), this protein is Glutamyl-tRNA reductase.